A 204-amino-acid polypeptide reads, in one-letter code: MFVLVEMVDTVRIPPWQFERKLNDSIDEELNKKLANKVMYNVGLCICLFDITKLEDAYVFPGDGASHTKVHFRYVVFHPFLDEILIGKIKGCSPEGVHVSLGFFDDILIPPESLQQPAKFDEAEQVWVWEYETEEGAHDLYMDIGEEVRFRVVDESFVDTSPTGPSSAEAASSSEELPKKEAPYTLMGSISEPGLGLLSWWTSS.

A disordered region spans residues 158 to 178 (VDTSPTGPSSAEAASSSEELP). The segment covering 166–175 (SSAEAASSSE) has biased composition (low complexity).

This sequence belongs to the eukaryotic RPB7/RPC8 RNA polymerase subunit family. In terms of assembly, component of the RNA polymerase III complex consisting of 17 subunits: a ten-subunit horseshoe-shaped catalytic core composed of POLR3A/RPC1, POLR3B/RPC2, POLR1C/RPAC1, POLR1D/RPAC2, POLR3K/RPC10, POLR2E/RPABC1, POLR2F/RPABC2, POLR2H/RPABC3, POLR2K/RPABC4 and POLR2L/RPABC5; a mobile stalk composed of two subunits POLR3H/RPC8 and CRCP/RPC9, protruding from the core and functioning primarily in transcription initiation; and additional subunits homologous to general transcription factors of the RNA polymerase II machinery, POLR3C/RPC3-POLR3F/RPC6-POLR3G/RPC7 heterotrimer required for transcription initiation and POLR3D/RPC4-POLR3E/RPC5 heterodimer involved in both transcription initiation and termination. Interacts with CRCP/RPC9. POLR3H/RPC8 and CRCP/RPC9 probably form a Pol III subcomplex.

The protein localises to the nucleus. Its function is as follows. DNA-dependent RNA polymerase catalyzes the transcription of DNA into RNA using the four ribonucleoside triphosphates as substrates. Specific peripheric component of RNA polymerase III (Pol III) which synthesizes small non-coding RNAs including 5S rRNA, snRNAs, tRNAs and miRNAs from at least 500 distinct genomic loci. With CRCP/RPC9 forms a mobile stalk that protrudes from Pol III core and functions primarily in transcription initiation. Pol III plays a key role in sensing and limiting infection by intracellular bacteria and DNA viruses. Acts as nuclear and cytosolic DNA sensor involved in innate immune response. Can sense non-self dsDNA that serves as template for transcription into dsRNA. The non-self RNA polymerase III transcripts, such as Epstein-Barr virus-encoded RNAs (EBERs) induce type I interferon and NF-kappa-B through the RIG-I pathway. This is DNA-directed RNA polymerase III subunit RPC8 (POLR3H) from Bos taurus (Bovine).